Here is a 295-residue protein sequence, read N- to C-terminus: Small ribosomal subunit biogenesis GTPase RsgA (295 aa).

The CP-type G domain maps to 68-228 (KNLLVKPHVA…VVDTPGFANL (161 aa)). Residues 117–120 (NKMD) and 170–178 (GLSGVGKSS) contribute to the GTP site. Zn(2+) is bound by residues cysteine 250, cysteine 255, histidine 257, and cysteine 263.

It belongs to the TRAFAC class YlqF/YawG GTPase family. RsgA subfamily. As to quaternary structure, monomer. Associates with 30S ribosomal subunit, binds 16S rRNA. Zn(2+) serves as cofactor.

Its subcellular location is the cytoplasm. One of several proteins that assist in the late maturation steps of the functional core of the 30S ribosomal subunit. Helps release RbfA from mature subunits. May play a role in the assembly of ribosomal proteins into the subunit. Circularly permuted GTPase that catalyzes slow GTP hydrolysis, GTPase activity is stimulated by the 30S ribosomal subunit. The chain is Small ribosomal subunit biogenesis GTPase RsgA from Thermotoga neapolitana (strain ATCC 49049 / DSM 4359 / NBRC 107923 / NS-E).